A 306-amino-acid polypeptide reads, in one-letter code: Protease HtpX homolog (306 aa).

2 consecutive transmembrane segments (helical) span residues 10–30 and 33–53; these read TTLLFALMWAIIMLIWWATGG and QTLSIYIVIGLITTFGTYWFS. A Zn(2+)-binding site is contributed by H135. The active site involves E136. H139 is a Zn(2+) binding site. The next 2 helical transmembrane spans lie at 149–169 and 181–201; these read AIASAMATVISYLGYSLMYFG and GLGLIGALLSVILAPIAASLI. E210 lines the Zn(2+) pocket.

Belongs to the peptidase M48B family. Zn(2+) serves as cofactor.

It is found in the cell membrane. The sequence is that of Protease HtpX homolog from Bifidobacterium longum (strain NCC 2705).